The primary structure comprises 446 residues: Signal recognition particle 54 kDa protein (446 aa).

GTP contacts are provided by residues 104-111 (GLQGSGKT), 184-188 (DTAGR), and 242-245 (TKMD).

It belongs to the GTP-binding SRP family. SRP54 subfamily. In terms of assembly, part of the signal recognition particle protein translocation system, which is composed of SRP and FtsY. Archaeal SRP consists of a 7S RNA molecule of 300 nucleotides and two protein subunits: SRP54 and SRP19.

It localises to the cytoplasm. The catalysed reaction is GTP + H2O = GDP + phosphate + H(+). Involved in targeting and insertion of nascent membrane proteins into the cytoplasmic membrane. Binds to the hydrophobic signal sequence of the ribosome-nascent chain (RNC) as it emerges from the ribosomes. The SRP-RNC complex is then targeted to the cytoplasmic membrane where it interacts with the SRP receptor FtsY. This Methanocorpusculum labreanum (strain ATCC 43576 / DSM 4855 / Z) protein is Signal recognition particle 54 kDa protein.